Consider the following 316-residue polypeptide: HTH-type transcriptional regulator PecT (316 aa).

An HTH lysR-type domain is found at 11-68; that stretch reads LDLDLLRTFVAVADLNTFAAAAVAVCRTQSAVSQQMQRLEQLIGKELFARHGRNKLLT. Residues 28–47 constitute a DNA-binding region (H-T-H motif); it reads FAAAAVAVCRTQSAVSQQMQ. Residues 293–316 form a disordered region; that stretch reads LPVSTGTESELREPPTDESLKDIT. Residues 301-316 are compositionally biased toward basic and acidic residues; sequence SELREPPTDESLKDIT.

The protein belongs to the LysR transcriptional regulatory family.

In terms of biological role, regulates pectinase gene expression. The polypeptide is HTH-type transcriptional regulator PecT (pecT) (Dickeya dadantii (strain 3937) (Erwinia chrysanthemi (strain 3937))).